The following is a 207-amino-acid chain: MSLLHRASFYISAARLDQLPPAGAPEVCFVGRSNAGKSSAINVLCNQRRLAFSSKTPGRTRLINMFGLPDPLAPGEQLGFLVDLPGYGYASVAHREKEKWADILGGYLRDRASLAGIVLLIDIRRGVTDLDRRLTNFIAPTGRPVLALLTKADKLPYGQRMRTVFAVRKDLADIGALHMVPFSSTERIGLEEAGAHIENWISPKVVP.

Residues 23 to 203 (GAPEVCFVGR…GAHIENWISP (181 aa)) enclose the EngB-type G domain. Residues 31–38 (GRSNAGKS), 58–62 (GRTRL), 83–86 (DLPG), 150–153 (TKAD), and 182–184 (FSS) each bind GTP. The Mg(2+) site is built by S38 and T60.

Belongs to the TRAFAC class TrmE-Era-EngA-EngB-Septin-like GTPase superfamily. EngB GTPase family. Requires Mg(2+) as cofactor.

In terms of biological role, necessary for normal cell division and for the maintenance of normal septation. The chain is Probable GTP-binding protein EngB from Bordetella bronchiseptica (strain ATCC BAA-588 / NCTC 13252 / RB50) (Alcaligenes bronchisepticus).